Here is a 217-residue protein sequence, read N- to C-terminus: Putative threonylcarbamoyl-AMP synthase (217 aa).

The region spanning Ser-14 to Val-199 is the YrdC-like domain.

It belongs to the SUA5 family.

The protein resides in the cytoplasm. The enzyme catalyses L-threonine + hydrogencarbonate + ATP = L-threonylcarbamoyladenylate + diphosphate + H2O. In terms of biological role, required for the formation of a threonylcarbamoyl group on adenosine at position 37 (t(6)A37) in tRNAs that read codons beginning with adenine. Catalyzes the conversion of L-threonine, HCO(3)(-)/CO(2) and ATP to give threonylcarbamoyl-AMP (TC-AMP) as the acyladenylate intermediate, with the release of diphosphate. The sequence is that of Putative threonylcarbamoyl-AMP synthase from Mycobacterium tuberculosis (strain CDC 1551 / Oshkosh).